Consider the following 422-residue polypeptide: COUP transcription factor 1 (422 aa).

Residues 1–80 (MAMVVSSWRD…QGPPGSGQSQ (80 aa)) are disordered. The segment covering 39 to 66 (EQQQAGSGAPHTPQTPGQPGAPATPGTQ) has biased composition (low complexity). Positions 82 to 157 (HIECVVCGDK…VGMRREAVQR (76 aa)) form a DNA-binding region, nuclear receptor. 2 consecutive NR C4-type zinc fingers follow at residues 85–105 (CVVC…CEGC) and 121–145 (CRAN…LKKC). An NR LBD domain is found at 183-409 (YLSGYISLLL…TLIRDMLLSG (227 aa)). The tract at residues 343-422 (LQEKSQCALE…NWPYMSIQCS (80 aa)) is important for dimerization.

Belongs to the nuclear hormone receptor family. NR2 subfamily. Binds DNA as dimer; homodimer and probable heterodimer with NR2F6. Interacts with GTF2B; this interaction is direct. Interacts with COPS2.

It localises to the nucleus. Functionally, coup (chicken ovalbumin upstream promoter) transcription factor binds to the ovalbumin promoter and, in conjunction with another protein (S300-II) stimulates initiation of transcription. Binds to both direct repeats and palindromes of the 5'-AGGTCA-3' motif. Represses transcriptional activity of LHCG. This Mus musculus (Mouse) protein is COUP transcription factor 1 (Nr2f1).